The following is a 315-amino-acid chain: Protein translocase subunit SecF (315 aa).

Helical transmembrane passes span 12–32 (AWIVSSLLVLISIFAMAISWA), 136–156 (ALFRSGVLALVISLLGIIIYL), 166–186 (VFAIIALLYDALITMGAFAIF), 188–208 (LVGGVEVDSLFLVALLTIIGF), 247–267 (SINTSLTTSLPLVAIFLFGGD), and 271–291 (FFALALIIGFASGVYSSIFMA).

The protein belongs to the SecD/SecF family. SecF subfamily. In terms of assembly, forms a complex with SecD. Part of the essential Sec protein translocation apparatus which comprises SecA, SecYEG and auxiliary proteins SecDF. Other proteins may also be involved.

The protein resides in the cell inner membrane. Its function is as follows. Part of the Sec protein translocase complex. Interacts with the SecYEG preprotein conducting channel. SecDF uses the proton motive force (PMF) to complete protein translocation after the ATP-dependent function of SecA. Probably participates in protein translocation into and across both the cytoplasmic and thylakoid membranes in cyanobacterial cells. The chain is Protein translocase subunit SecF from Synechocystis sp. (strain ATCC 27184 / PCC 6803 / Kazusa).